The primary structure comprises 473 residues: Probable DNA N(6)-methyladenine demethylase ALKBH1B (473 aa).

357-359 (NFY) is a binding site for 2-oxoglutarate. 3 residues coordinate Fe cation: histidine 368, aspartate 391, and histidine 449. 461-465 (RLFFR) provides a ligand contact to 2-oxoglutarate.

This sequence belongs to the alkB family. The cofactor is Fe(2+). In terms of tissue distribution, undetectable.

The enzyme catalyses an N(6)-methyl-2'-deoxyadenosine in DNA + 2-oxoglutarate + O2 = a 2'-deoxyadenosine in DNA + formaldehyde + succinate + CO2. In terms of biological role, dioxygenase that may catalyzes DNA N(6)-methyladenine (6 mA) demethylation. Requires molecular oxygen, alpha-ketoglutarate and iron. The sequence is that of Probable DNA N(6)-methyladenine demethylase ALKBH1B from Arabidopsis thaliana (Mouse-ear cress).